Reading from the N-terminus, the 104-residue chain is N(4)-acetylcytidine amidohydrolase (104 aa).

Positions 6–102 (ITFYQRFEAD…SEFWVIEIRL (97 aa)) constitute an ASCH domain. Catalysis depends on K21, which acts as the Proton acceptor. The active-site Nucleophile is the T24. The Proton donor role is filled by E74.

The protein belongs to the N(4)-acetylcytidine amidohydrolase family.

It catalyses the reaction N(4)-acetylcytidine + H2O = cytidine + acetate + H(+). The enzyme catalyses N(4)-acetyl-2'-deoxycytidine + H2O = 2'-deoxycytidine + acetate + H(+). The catalysed reaction is N(4)-acetylcytosine + H2O = cytosine + acetate + H(+). Functionally, catalyzes the hydrolysis of N(4)-acetylcytidine (ac4C). This chain is N(4)-acetylcytidine amidohydrolase, found in Haemophilus influenzae (strain PittEE).